Consider the following 637-residue polypeptide: Chaperone protein HtpG (637 aa).

Residues 1 to 328 (MADIEELKFD…SSDLPLNISR (328 aa)) are a; substrate-binding. The interval 329 to 556 (ETLQNNRIVE…DNSMDIRMER (228 aa)) is b. A disordered region spans residues 488–508 (IGASDDSGDKTSEDSGESASD). Residues 494 to 508 (SGDKTSEDSGESASD) show a composition bias toward basic and acidic residues. The tract at residues 557–637 (FLREQKQLNY…GVLAKIFSSK (81 aa)) is c.

Belongs to the heat shock protein 90 family. Homodimer.

The protein localises to the cytoplasm. Its function is as follows. Molecular chaperone. Has ATPase activity. In Anaplasma phagocytophilum (strain HZ), this protein is Chaperone protein HtpG.